The following is a 364-amino-acid chain: Popeye domain-containing protein 2 (364 aa).

Residue N4 is glycosylated (N-linked (GlcNAc...) asparagine). A run of 2 helical transmembrane segments spans residues 37–57 (LLLG…FGFL) and 77–97 (IVLW…HLVY). The disordered stretch occupies residues 276–333 (ADAGPESEKGDEEVCEPAVSPPQATPTSLQQTPPCSTPPATTNFPAPPTRARLSRPDS). Positions 300 to 309 (TPTSLQQTPP) are enriched in polar residues. The residue at position 361 (T361) is a Phosphothreonine.

It belongs to the popeye family. Expressed predominantly in the heart and in the skeletal muscle.

The protein localises to the membrane. It localises to the cell membrane. It is found in the sarcolemma. Its function is as follows. Important for the maintenance of cardiac function. Plays a regulatory function in heart rate dynamics mediated, at least in part, through cAMP-binding and, probably, by increasing cell surface expression of the potassium channel KCNK2 and enhancing current density. The protein is Popeye domain-containing protein 2 (POPDC2) of Homo sapiens (Human).